The chain runs to 695 residues: Spermidine/spermine N(1)-acetyltransferase-like protein 1 (695 aa).

Composition is skewed to polar residues over residues 1-39 (MNQSGTNQSSLSDSNQAGINQPSTNSLGMNQMDMNQGSA), 52-68 (PSMSQAGMRQSGTNLPD), and 78-98 (DTWQLGRSQPGMLQQELSQLV). Disordered regions lie at residues 1–274 (MNQS…MNQM), 290–332 (DMKQ…PGMW), 344–375 (ASISQPGPPQRAPSQSGPRQSSTSQAGTNQSG), and 387–493 (RQSG…GLSQ). Positions 105–122 (SQPDPSQPGPSQSGPSQS) are enriched in low complexity. Polar residues-rich tracts occupy residues 123 to 179 (RMRQ…TGLS), 197 to 208 (GVQQPGISQQVP), 231 to 266 (PDTSQSCKNQTDMSQPDANQSSLSDSNQTGIIQPSP), 294 to 310 (PSMSQAGMRQSGTNLPD), 355 to 375 (APSQSGPRQSSTSQAGTNQSG), 389 to 422 (SGGSQPSMRQVGTSQSGTSQIGMSQPGTWQTGLS), and 459 to 471 (PGTSQSSKNQTGM). The region spanning 529-695 (FQIRHAEAGD…EELLDMAWEE (167 aa)) is the N-acetyltransferase domain. Position 552–553 (552–553 (CE)) interacts with substrate. Acetyl-CoA is bound by residues 618–620 (FYV) and 626–631 (GLGIGA). Residues 650-652 (HFL) and glutamate 676 contribute to the substrate site.

This sequence belongs to the acetyltransferase family.

This is Spermidine/spermine N(1)-acetyltransferase-like protein 1 (SATL1) from Homo sapiens (Human).